The following is a 232-amino-acid chain: Ubiquitin-conjugating enzyme E2-24 kDa (232 aa).

Residues 1 to 37 are compositionally biased toward low complexity; that stretch reads MSSTPAAGSAAEVATSSATSNAPSAPSTTASNVSNTS. The segment at 1-87 is disordered; the sequence is MSSTPAAGSA…PRISRALGTS (87 aa). A compositionally biased stretch (gly residues) spans 58–67; that stretch reads GASGSNAGGG. Residues 86 to 232 form the UBC core domain; sequence TSAKRIQKEL…ARLWTKRYAT (147 aa). Catalysis depends on Cys-170, which acts as the Glycyl thioester intermediate.

It belongs to the ubiquitin-conjugating enzyme family.

The catalysed reaction is S-ubiquitinyl-[E1 ubiquitin-activating enzyme]-L-cysteine + [E2 ubiquitin-conjugating enzyme]-L-cysteine = [E1 ubiquitin-activating enzyme]-L-cysteine + S-ubiquitinyl-[E2 ubiquitin-conjugating enzyme]-L-cysteine.. The protein operates within protein modification; protein ubiquitination. Functionally, catalyzes the covalent attachment of ubiquitin to other proteins. The chain is Ubiquitin-conjugating enzyme E2-24 kDa from Drosophila melanogaster (Fruit fly).